Here is a 60-residue protein sequence, read N- to C-terminus: Mastoparan-VT5 (60 aa).

A signal peptide spans 1 to 27 (MKNTILILFTAFIALLGFFGMIAEPLA). AXPX repeat units lie at residues 27–30 (ADPL), 31–34 (ADPL), 37–40 (ADPD), and 41–44 (ADPE). A propeptide spanning residues 28-45 (DPLADPLPDADPDADPET) is cleaved from the precursor.

Belongs to the MCD family. Mastoparan subfamily. As to expression, expressed by the venom gland.

The protein localises to the secreted. In terms of biological role, the synthetic peptide shows weak antimicrobial activities against a few Gram-positive bacteria (only 2 on the 11 strains tested) and the fungus C.albicans. Does not show activity against all the Gram-negative bacteria tested. Exhibits little hemolytic activity against washed human erythrocytes. The protein is Mastoparan-VT5 of Vespa tropica (Greater banded hornet).